Here is a 251-residue protein sequence, read N- to C-terminus: Glucosamine-6-phosphate deaminase (251 aa).

Residue D73 is the Proton acceptor; for enolization step of the active site. N142 (for ring-opening step) is an active-site residue. The active-site Proton acceptor; for ring-opening step is H144. Residue E149 is the For ring-opening step of the active site.

The protein belongs to the glucosamine/galactosamine-6-phosphate isomerase family. NagB subfamily.

The enzyme catalyses alpha-D-glucosamine 6-phosphate + H2O = beta-D-fructose 6-phosphate + NH4(+). The protein operates within amino-sugar metabolism; N-acetylneuraminate degradation; D-fructose 6-phosphate from N-acetylneuraminate: step 5/5. Functionally, catalyzes the reversible isomerization-deamination of glucosamine 6-phosphate (GlcN6P) to form fructose 6-phosphate (Fru6P) and ammonium ion. This chain is Glucosamine-6-phosphate deaminase, found in Rhodopirellula baltica (strain DSM 10527 / NCIMB 13988 / SH1).